The following is a 533-amino-acid chain: Flavin-containing monooxygenase 5 (533 aa).

Residue arginine 5 is modified to Dimethylated arginine. FAD-binding positions include glycine 10–serine 14, glutamate 33, and leucine 41–tryptophan 42. Serine 54 is subject to Phosphoserine. Tyrosine 56 is subject to Phosphotyrosine. At serine 58 the chain carries Phosphoserine. Asparagine 62 to threonine 63 contacts FAD. Serine 196 to aspartate 199 contributes to the NADP(+) binding site. Serine 280 is subject to Phosphoserine. Threonine 284 is modified (phosphothreonine). Serine 401 carries the phosphoserine modification. The helical transmembrane segment at methionine 510–methionine 530 threads the bilayer.

This sequence belongs to the FMO family. It depends on FAD as a cofactor. In terms of tissue distribution, expressed in liver.

The protein localises to the microsome membrane. Its subcellular location is the endoplasmic reticulum membrane. The catalysed reaction is N,N-dimethylaniline + NADPH + O2 + H(+) = N,N-dimethylaniline N-oxide + NADP(+) + H2O. It catalyses the reaction NADPH + O2 + H(+) = H2O2 + NADP(+). It carries out the reaction heptan-2-one + NADPH + O2 + H(+) = pentyl acetate + NADP(+) + H2O. The enzyme catalyses octan-3-one + NADPH + O2 + H(+) = pentyl propanoate + NADP(+) + H2O. The catalysed reaction is octan-3-one + NADPH + O2 + H(+) = ethyl hexanoate + NADP(+) + H2O. It catalyses the reaction hexan-3-one + NADPH + O2 + H(+) = ethyl butanoate + NADP(+) + H2O. It carries out the reaction hexan-3-one + NADPH + O2 + H(+) = propyl propanoate + NADP(+) + H2O. The enzyme catalyses heptan-4-one + NADPH + O2 + H(+) = propyl butanoate + NADP(+) + H2O. The catalysed reaction is (2E)-geranial + NADPH + O2 + H(+) = (1E)-2,6-dimethylhepta-1,5-dien-1-yl formate + NADP(+) + H2O. It catalyses the reaction sulcatone + NADPH + O2 + H(+) = 4-methylpent-3-en-1-yl acetate + NADP(+) + H2O. Functionally, acts as a Baeyer-Villiger monooxygenase on a broad range of substrates. Catalyzes the insertion of an oxygen atom into a carbon-carbon bond adjacent to a carbonyl, which converts ketones to esters. Active on diverse carbonyl compounds, whereas soft nucleophiles are mostly non- or poorly reactive. In contrast with other forms of FMO it is non- or poorly active on 'classical' substrates such as drugs, pesticides, and dietary components containing soft nucleophilic heteroatoms. Able to oxidize drug molecules bearing a carbonyl group on an aliphatic chain, such as nabumetone and pentoxifylline. Also, in the absence of substrates, shows slow but yet significant NADPH oxidase activity. Acts as a positive modulator of cholesterol biosynthesis as well as glucose homeostasis, promoting metabolic aging via pleiotropic effects. The protein is Flavin-containing monooxygenase 5 (FMO5) of Cavia porcellus (Guinea pig).